The primary structure comprises 316 residues: Olfactory receptor 10H28 (316 aa).

The Extracellular segment spans residues 1–26; that stretch reads MPGQNYSTISEFILFGFSAFPHQMLP. Residue Asn5 is glycosylated (N-linked (GlcNAc...) asparagine). Residues 27–47 traverse the membrane as a helical segment; the sequence is ALFLLYLLMYLFTLLGNLVIM. Over 48-57 the chain is Cytoplasmic; it reads AAIWTEHRLH. The chain crosses the membrane as a helical span at residues 58-78; that stretch reads TPMYLFLCALSISEILFTVVI. Residues 79–100 lie on the Extracellular side of the membrane; sequence TPRMLSDMLSTHRSITFIACAN. A disulfide bridge links Cys98 with Cys190. A helical membrane pass occupies residues 101–121; the sequence is QLFFSFTFGYTHSFLLVVMGY. Residues 122-144 are Cytoplasmic-facing; the sequence is DRYVAICRPLHYHALMSLQGCAR. The chain crosses the membrane as a helical span at residues 145–165; the sequence is LVAWSWAGGSLIGMALTIIIF. The Extracellular portion of the chain corresponds to 166–207; sequence HLTFCESNVIHHILCHVFSLLKLACGERTAFVTIAVILVCVT. A helical transmembrane segment spans residues 208 to 228; sequence PLIGCLVFIILSYIFIVAAIL. Over 229-241 the chain is Cytoplasmic; that stretch reads RIPSTEGRHKTFS. A helical transmembrane segment spans residues 242–262; that stretch reads TCASHLTVVIVHYGFASIIYL. The Extracellular segment spans residues 263 to 273; the sequence is KSRGLYSQYTD. Residues 274–294 form a helical membrane-spanning segment; the sequence is TLMSTTYTVFTPFLSPIIFSL. Over 295 to 316 the chain is Cytoplasmic; the sequence is RNKELKNAIIKSFHRNVCQQSI.

It belongs to the G-protein coupled receptor 1 family.

Its subcellular location is the cell membrane. Functionally, odorant receptor. The protein is Olfactory receptor 10H28 of Mus musculus (Mouse).